The following is a 201-amino-acid chain: FMN-dependent NADH:quinone oxidoreductase (201 aa).

FMN is bound by residues S9 and 16–18; that span reads SYS.

This sequence belongs to the azoreductase type 1 family. As to quaternary structure, homodimer. FMN is required as a cofactor.

The enzyme catalyses 2 a quinone + NADH + H(+) = 2 a 1,4-benzosemiquinone + NAD(+). The catalysed reaction is N,N-dimethyl-1,4-phenylenediamine + anthranilate + 2 NAD(+) = 2-(4-dimethylaminophenyl)diazenylbenzoate + 2 NADH + 2 H(+). Quinone reductase that provides resistance to thiol-specific stress caused by electrophilic quinones. Functionally, also exhibits azoreductase activity. Catalyzes the reductive cleavage of the azo bond in aromatic azo compounds to the corresponding amines. This is FMN-dependent NADH:quinone oxidoreductase from Mesomycoplasma hyopneumoniae (strain 232) (Mycoplasma hyopneumoniae).